The sequence spans 274 residues: 2,3,4,5-tetrahydropyridine-2,6-dicarboxylate N-succinyltransferase (274 aa).

The substrate site is built by R104 and D141.

This sequence belongs to the transferase hexapeptide repeat family. As to quaternary structure, homotrimer.

The protein localises to the cytoplasm. The catalysed reaction is (S)-2,3,4,5-tetrahydrodipicolinate + succinyl-CoA + H2O = (S)-2-succinylamino-6-oxoheptanedioate + CoA. Its pathway is amino-acid biosynthesis; L-lysine biosynthesis via DAP pathway; LL-2,6-diaminopimelate from (S)-tetrahydrodipicolinate (succinylase route): step 1/3. The protein is 2,3,4,5-tetrahydropyridine-2,6-dicarboxylate N-succinyltransferase of Shewanella oneidensis (strain ATCC 700550 / JCM 31522 / CIP 106686 / LMG 19005 / NCIMB 14063 / MR-1).